The sequence spans 1224 residues: MKPRARGWRGLAALWMLLAQVAEQAPACAMGPAAAAPGSPSVPRPPPPAERPGWMEKGEYDLVSAYEVDHRGDYVSHEIMHHQRRRRAVPVSEVESLHLRLKGSRHDFHMDLRTSSSLVAPGFIVQTLGKTGTKSVQTLPPEDFCFYQGSLRSHRNSSVALSTCQGLSGMIRTEEADYFLRPLPSHLSWKLGRAAQGSSPSHVLYKRSTEPHAPGASEVLVTSRTWELAHQPLHSSDLRLGLPQKQHFCGRRKKYMPQPPKEDLFILPDEYKSCLRHKRSLLRSHRNEELNVETLVVVDKKMMQNHGHENITTYVLTILNMVSALFKDGTIGGNINIAIVGLILLEDEQPGLVISHHADHTLSSFCQWQSGLMGKDGTRHDHAILLTGLDICSWKNEPCDTLGFAPISGMCSKYRSCTINEDTGLGLAFTIAHESGHNFGMIHDGEGNMCKKSEGNIMSPTLAGRNGVFSWSPCSRQYLHKFLSTAQAICLADQPKPVKEYKYPEKLPGELYDANTQCKWQFGEKAKLCMLDFKKDICKALWCHRIGRKCETKFMPAAEGTICGHDMWCRGGQCVKYGDEGPKPTHGHWSDWSSWSPCSRTCGGGVSHRSRLCTNPKPSHGGKFCEGSTRTLKLCNSQKCPRDSVDFRAAQCAEHNSRRFRGRHYKWKPYTQVEDQDLCKLYCIAEGFDFFFSLSNKVKDGTPCSEDSRNVCIDGICERVGCDNVLGSDAVEDVCGVCNGNNSACTIHRGLYTKHHHTNQYYHMVTIPSGARSIRIYEMNVSTSYISVRNALRRYYLNGHWTVDWPGRYKFSGTTFDYRRSYNEPENLIATGPTNETLIVELLFQGRNPGVAWEYSMPRLGTEKQPPAQPSYTWAIVRSECSVSCGGGQMTVREGCYRDLKFQVNMSFCNPKTRPVTGLVPCKVSACPPSWSVGNWSACSRTCGGGAQSRPVQCTRRVHYDSEPVPASLCPQPAPSSRQACNSQSCPPAWSAGPWAECSHTCGKGWRKRAVACKSTNPSARAQLLPDAVCTSEPKPRMHEACLLQRCHKPKKLQWLVSAWSQCSVTCERGTQKRFLKCAEKYVSGKYRELASKKCSHLPKPSLELERACAPLPCPRHPPFAAAGPSRGSWFASPWSQCTASCGGGVQTRSVQCLAGGRPASGCLLHQKPSASLACNTHFCPIAEKKDAFCKDYFHWCYLVPQHGMCSHKFYGKQCCKTCSKSNL.

The signal sequence occupies residues 1–24; the sequence is MKPRARGWRGLAALWMLLAQVAEQ. Positions 25-279 are excised as a propeptide; that stretch reads APACAMGPAA…EYKSCLRHKR (255 aa). The segment at 31 to 53 is disordered; the sequence is GPAAAAPGSPSVPRPPPPAERPG. Pro residues predominate over residues 40 to 50; that stretch reads PSVPRPPPPAE. An N-linked (GlcNAc...) asparagine glycan is attached at Asn156. The short motif at 247-254 is the Cysteine switch element; it reads HFCGRRKK. Cys249 serves as a coordination point for Zn(2+). The Peptidase M12B domain maps to 290–495; sequence LNVETLVVVD…AQAICLADQP (206 aa). The N-linked (GlcNAc...) asparagine glycan is linked to Asn310. 11 disulfides stabilise this stretch: Cys366–Cys417, Cys392–Cys399, Cys411–Cys490, Cys450–Cys474, Cys518–Cys543, Cys529–Cys550, Cys538–Cys569, Cys563–Cys574, Cys598–Cys635, Cys602–Cys640, and Cys613–Cys625. His433 contributes to the Zn(2+) binding site. The active site involves Glu434. Residues His437 and His443 each contribute to the Zn(2+) site. The Disintegrin domain maps to 496–585; that stretch reads KPVKEYKYPE…KYGDEGPKPT (90 aa). A TSP type-1 1 domain is found at 586–641; it reads HGHWSDWSSWSPCSRTCGGGVSHRSRLCTNPKPSHGGKFCEGSTRTLKLCNSQKCP. N-linked (GlcNAc...) asparagine glycosylation is found at Asn741, Asn780, Asn835, Asn905, and Asn935. Residues 747–873 are spacer; sequence IHRGLYTKHH…KQPPAQPSYT (127 aa). TSP type-1 domains are found at residues 874 to 922, 927 to 987, 988 to 1048, 1051 to 1115, and 1127 to 1181; these read WAIV…LVPC, CPPS…QSCP, PAWS…QRCH, KKLQ…LPCP, and RGSW…HFCP. 3 disulfide bridges follow: Cys939–Cys981, Cys943–Cys986, and Cys954–Cys970. The PLAC domain maps to 1186–1223; the sequence is KDAFCKDYFHWCYLVPQHGMCSHKFYGKQCCKTCSKSN.

Requires Zn(2+) as cofactor. The precursor is cleaved by a furin endopeptidase. Post-translationally, glycosylated. Can be O-fucosylated by POFUT2 on a serine or a threonine residue found within the consensus sequence C1-X(2)-(S/T)-C2-G of the TSP type-1 repeat domains where C1 and C2 are the first and second cysteine residue of the repeat, respectively. Fucosylated repeats can then be further glycosylated by the addition of a beta-1,3-glucose residue by the glucosyltransferase, B3GALTL. Fucosylation mediates the efficient secretion of ADAMTS family members. Can also be C-glycosylated with one or two mannose molecules on tryptophan residues within the consensus sequence W-X-X-W of the TPRs, and N-glycosylated. These other glycosylations can also facilitate secretion. Expressed in fetal lung and kidney and in adult prostate and ovary.

Its subcellular location is the secreted. It localises to the extracellular space. It is found in the extracellular matrix. This Homo sapiens (Human) protein is A disintegrin and metalloproteinase with thrombospondin motifs 16 (ADAMTS16).